The primary structure comprises 460 residues: Argininosuccinate lyase (460 aa).

Belongs to the lyase 1 family. Argininosuccinate lyase subfamily.

It localises to the cytoplasm. It catalyses the reaction 2-(N(omega)-L-arginino)succinate = fumarate + L-arginine. It participates in amino-acid biosynthesis; L-arginine biosynthesis; L-arginine from L-ornithine and carbamoyl phosphate: step 3/3. This Desulforamulus reducens (strain ATCC BAA-1160 / DSM 100696 / MI-1) (Desulfotomaculum reducens) protein is Argininosuccinate lyase.